We begin with the raw amino-acid sequence, 345 residues long: S-adenosylmethionine:tRNA ribosyltransferase-isomerase (345 aa).

It belongs to the QueA family. In terms of assembly, monomer.

Its subcellular location is the cytoplasm. The catalysed reaction is 7-aminomethyl-7-carbaguanosine(34) in tRNA + S-adenosyl-L-methionine = epoxyqueuosine(34) in tRNA + adenine + L-methionine + 2 H(+). The protein operates within tRNA modification; tRNA-queuosine biosynthesis. Its function is as follows. Transfers and isomerizes the ribose moiety from AdoMet to the 7-aminomethyl group of 7-deazaguanine (preQ1-tRNA) to give epoxyqueuosine (oQ-tRNA). The sequence is that of S-adenosylmethionine:tRNA ribosyltransferase-isomerase from Acinetobacter baumannii (strain AB0057).